The following is a 400-amino-acid chain: tRNA(Met) cytidine acetate ligase (400 aa).

Residues 7 to 20 (IVEYNPFHNGHLYH), glycine 101, asparagine 159, and arginine 184 contribute to the ATP site.

It belongs to the TmcAL family.

It is found in the cytoplasm. It catalyses the reaction cytidine(34) in elongator tRNA(Met) + acetate + ATP = N(4)-acetylcytidine(34) in elongator tRNA(Met) + AMP + diphosphate. In terms of biological role, catalyzes the formation of N(4)-acetylcytidine (ac(4)C) at the wobble position of elongator tRNA(Met), using acetate and ATP as substrates. First activates an acetate ion to form acetyladenylate (Ac-AMP) and then transfers the acetyl group to tRNA to form ac(4)C34. This chain is tRNA(Met) cytidine acetate ligase, found in Caldicellulosiruptor saccharolyticus (strain ATCC 43494 / DSM 8903 / Tp8T 6331).